The sequence spans 83 residues: ATP synthase subunit c (83 aa).

Transmembrane regions (helical) follow at residues 10-30 (IAVALLIGMGALGTAIGFGLL) and 52-72 (MFIVAGLLDAVTMIGVGIALF).

It belongs to the ATPase C chain family. As to quaternary structure, F-type ATPases have 2 components, F(1) - the catalytic core - and F(0) - the membrane proton channel. F(1) has five subunits: alpha(3), beta(3), gamma(1), delta(1), epsilon(1). F(0) has three main subunits: a(1), b(2) and c(10-14). The alpha and beta chains form an alternating ring which encloses part of the gamma chain. F(1) is attached to F(0) by a central stalk formed by the gamma and epsilon chains, while a peripheral stalk is formed by the delta and b chains.

Its subcellular location is the cell inner membrane. In terms of biological role, f(1)F(0) ATP synthase produces ATP from ADP in the presence of a proton or sodium gradient. F-type ATPases consist of two structural domains, F(1) containing the extramembraneous catalytic core and F(0) containing the membrane proton channel, linked together by a central stalk and a peripheral stalk. During catalysis, ATP synthesis in the catalytic domain of F(1) is coupled via a rotary mechanism of the central stalk subunits to proton translocation. Key component of the F(0) channel; it plays a direct role in translocation across the membrane. A homomeric c-ring of between 10-14 subunits forms the central stalk rotor element with the F(1) delta and epsilon subunits. The protein is ATP synthase subunit c of Shewanella baltica (strain OS223).